The primary structure comprises 92 residues: Probable Fe(2+)-trafficking protein (92 aa).

The protein belongs to the Fe(2+)-trafficking protein family.

Could be a mediator in iron transactions between iron acquisition and iron-requiring processes, such as synthesis and/or repair of Fe-S clusters in biosynthetic enzymes. The polypeptide is Probable Fe(2+)-trafficking protein (Shewanella frigidimarina (strain NCIMB 400)).